A 605-amino-acid chain; its full sequence is Podocalyxin-like protein 2 (605 aa).

The N-terminal stretch at 1 to 32 (MGRLLRAARLPPLLSPLLLLLVGGAFLGACVA) is a signal peptide. At 33–500 (GSDEPGPEGL…ASQVRSDYGT (468 aa)) the chain is on the extracellular side. The O-linked (Xyl...) (chondroitin sulfate) serine glycan is linked to S79. Y97 and Y118 each carry sulfotyrosine. The tract at residues 129–134 (SIEDTS) is O-glycosylated at one site. The segment at 129-347 (SIEDTSQAQE…PGDMELTPSS (219 aa)) is disordered. An O-linked (GalNAc...) serine glycan is attached at S144. The span at 162-189 (EEEEEEEEEEEREKEEVEKQEEEEEEEL) shows a compositional bias: acidic residues. An N-linked (GlcNAc...) asparagine glycan is attached at N193. Residues 207–217 (SLTSSSQTPGA) are compositionally biased toward polar residues. 2 stretches are compositionally biased toward low complexity: residues 241–255 (PSLL…TVTP) and 288–298 (EATAGAAGLSG). N395 is a glycosylation site (N-linked (GlcNAc...) asparagine). Residues 501–521 (LFVVLVVIGAICIIIIALGLL) traverse the membrane as a helical segment. Residues 522–605 (YNCWQRRLPK…SDVFEEDTHL (84 aa)) are Cytoplasmic-facing. The segment at 554–605 (LDVASDSQSEMQEKHPSLNGGGALNGPGSWGALMGGKRDPEDSDVFEEDTHL) is disordered. The residue at position 570 (S570) is a Phosphoserine. Residues 572–582 (NGGGALNGPGS) are compositionally biased toward gly residues. Over residues 594–605 (EDSDVFEEDTHL) the composition is skewed to acidic residues. S596 bears the Phosphoserine mark.

The protein belongs to the podocalyxin family. In terms of assembly, homodimer; disulfide-linked. Interacts with SELL, SELE and SELP. In terms of processing, O-glycosylated; contains chondroitin sulfate. Displays sialylated O-linked oligosaccharides. Sulfation is necessary for interaction with SELL. Sialylated O-linked oligosaccharides are necessary for interaction with SELL, SELE and SELP. As to expression, expressed in T-cells, B-cells and monocytes. Expression is higher on memory and germinal center cells than on naive B-cells (at protein level). Highly expressed in brain. Moderately expressed in pancreas, kidney and lymphoid node. Weakly expressed in liver. Detected in both endothelial cells and CD34+ bone marrow cells.

The protein localises to the membrane. Functionally, acts as a ligand for vascular selectins. Mediates rapid rolling of leukocytes over vascular surfaces through high affinity divalent cation-dependent interactions with E-, P- and L-selectins. This chain is Podocalyxin-like protein 2 (PODXL2), found in Homo sapiens (Human).